A 393-amino-acid chain; its full sequence is MDVNNLKQILEETSALSDHKTKTEKYKSILQQLVESKQVAPLKVFITHLTDESTPLVISRTILLSFTSSHKTLPEDIQMELGIFVLDRIQNRVVAFEEQVSEIRYNLAKLYERQENWRESARCLIAIPLDSSQRVISPEYKVKIYVKIARLFLEEEESGQAETYINRASDSLHLVKNQKLILAHKTCFARIMDYKRMFLKASLRYYDLSQCLPKDTERMHALSCAIVCAILDKAGPQRSRTLATLYKDERSQQLGVYTFLEKMFLERILKKTEVKKFAEQLKPHQMALLSDGNTVLDRAVIEHNLLSASKLYNNITFDELGSLLEIQAEKAEKVASKMVCEERLIGSIDQIERLIQFENVGDSLTQWDKKIEGLCIHMNNIIESISKYPEFIV.

The 166-residue stretch at methionine 197–aspartate 362 folds into the PCI domain.

The protein belongs to the CSN4 family. In terms of assembly, component of the CSN complex. The holocomplex is comprised of 8 subunits csn1-8. In the complex, it probably interacts directly with csn1, csn2, csn3, csn4, csn6 and csn8.

The protein resides in the cytoplasm. It localises to the nucleus. Functionally, component of the COP9 signalosome complex (CSN), a complex involved in various cellular and developmental processes. The CSN complex is an essential regulator of the ubiquitin (Ubl) conjugation pathway by mediating the deneddylation of the cullin subunits of E3 ligase complexes, leading to modify the Ubl ligase activity. The protein is COP9 signalosome complex subunit 4 (csn4) of Dictyostelium discoideum (Social amoeba).